A 402-amino-acid polypeptide reads, in one-letter code: Multidrug resistance protein MdtH (402 aa).

Topologically, residues 1 to 12 (MSRVSQARNLGK) are cytoplasmic. The chain crosses the membrane as a helical span at residues 13 to 33 (YFLLIDNMLVVLGFFVVFPLI). Residues 34 to 98 (SIRFVDQMGW…GFATMGIAHE (65 aa)) are Periplasmic-facing. The chain crosses the membrane as a helical span at residues 99-116 (PWLLWFSCFLSGLGGTLF). Over 117 to 138 (DPPRSALVVKLIRPEQRGRFFS) the chain is Cytoplasmic. A helical membrane pass occupies residues 139-159 (LLMMQDSAGAVIGALLGSWLL). Over 160-164 (QYDFR) the chain is Periplasmic. Residues 165–185 (LVCATGAILFILCALFNAWLL) traverse the membrane as a helical segment. Topologically, residues 186–213 (PAWKLSTVRTPVREGMRRVMSDKRFVTY) are cytoplasmic. The helical transmembrane segment at 214-234 (VLTLAGYYMLAVQVMLMLPIM) threads the bilayer. The Periplasmic portion of the chain corresponds to 235–243 (VNDIAGSPA). A helical membrane pass occupies residues 244–264 (AVKWMYAIEACLSLTLLYPIA). Topologically, residues 265 to 276 (RWSEKRFRLEHR) are cytoplasmic. Residues 277-297 (LMAGLLVMSLSMIPIGMVGNL) form a helical membrane-spanning segment. At 298–299 (QQ) the chain is on the periplasmic side. A helical membrane pass occupies residues 300–320 (LFTLICAFYIGSVIAEPARET). The Cytoplasmic segment spans residues 321 to 339 (LSASLADARARGSYMGFSR). Residues 340-360 (LGLAIGGAIGYIGGGWLFDMG) form a helical membrane-spanning segment. The Periplasmic segment spans residues 361-367 (KALTQPE). A helical membrane pass occupies residues 368-388 (LPWMMLGIIGFITFLALGWQF). Topologically, residues 389-402 (SHKRTPRRMLEPGA) are cytoplasmic.

It belongs to the major facilitator superfamily. DHA1 family. MdtH (TC 2.A.1.2.21) subfamily.

It is found in the cell inner membrane. The sequence is that of Multidrug resistance protein MdtH from Salmonella paratyphi B (strain ATCC BAA-1250 / SPB7).